Reading from the N-terminus, the 2201-residue chain is Activating signal cointegrator 1 complex subunit 3 (2201 aa).

Phosphoserine is present on serine 12. Coiled-coil stretches lie at residues 18–81 (KQDN…KQIV) and 328–356 (IQSEQEKQLMKQYRREEKRIARREKKAGE). Residues 486 to 669 (ETAYNTNENM…FLHVNPCIGL (184 aa)) enclose the Helicase ATP-binding 1 domain. 499 to 506 (APTGAGKT) is an ATP binding site. At lysine 572 the chain carries N6-acetyllysine. The DEVH box signature appears at 611–614 (DEVH). The region spanning 696 to 914 (QLNNMDEVCY…GTVTNVEEAV (219 aa)) is the Helicase C-terminal 1 domain. An SEC63 1 domain is found at 978 to 1287 (STDLGRTASH…GAEAVCIINF (310 aa)). One can recognise a Helicase ATP-binding 2 domain in the interval 1336-1511 (HTLYHTDCNV…WLNIRQMGLF (176 aa)). 1349–1356 (APTGSGKT) lines the ATP pocket. Positions 1453–1456 (DEIH) match the DEIH box motif. In terms of domain architecture, Helicase C-terminal 2 spans 1544-1739 (PTFQAIRSHS…VLSDHLNAEI (196 aa)). In terms of domain architecture, SEC63 2 spans 1812–2176 (PLTYGRIASY…LGLDQQYDIH (365 aa)).

This sequence belongs to the helicase family. Identified in the ASCC complex that contains ASCC1, ASCC2 and ASCC3. Functions as a scaffolding subunit that interacts directly with both ASCC1 and ASCC2. Interacts directly with ALKBH3, and thereby recruits ALKBH3 to the ASCC complex. Part of the ASC-1/TRIP4 complex, that contains TRIP4, ASCC1, ASCC2 and ASCC3. Part of the RQT (ribosome quality control trigger) complex, that contains ASCC2, ASCC3 and TRIP4. Associates with ribosomes; recruited to collided ribosomes. Interacts with ZCCHC4. Interacts with ZNF598. Interacts with RPS3.

It is found in the nucleus. It localises to the nucleus speckle. Its subcellular location is the cytoplasm. The protein resides in the cytosol. The enzyme catalyses Couples ATP hydrolysis with the unwinding of duplex DNA by translocating in the 3'-5' direction.. It catalyses the reaction ATP + H2O = ADP + phosphate + H(+). Functionally, ATPase involved both in DNA repair and rescue of stalled ribosomes. 3'-5' DNA helicase involved in repair of alkylated DNA: promotes DNA unwinding to generate single-stranded substrate needed for ALKBH3, enabling ALKBH3 to process alkylated N3-methylcytosine (3mC) within double-stranded regions. Also involved in activation of the ribosome quality control (RQC) pathway, a pathway that degrades nascent peptide chains during problematic translation. Drives the splitting of stalled ribosomes that are ubiquitinated in a ZNF598-dependent manner, as part of the ribosome quality control trigger (RQT) complex. Part of the ASC-1 complex that enhances NF-kappa-B, SRF and AP1 transactivation. In Bos taurus (Bovine), this protein is Activating signal cointegrator 1 complex subunit 3 (ascc3).